The chain runs to 541 residues: GMP synthase [glutamine-hydrolyzing] (541 aa).

The Glutamine amidotransferase type-1 domain occupies 17-212 (TILVLDFGSQ…AVDICQSTTD (196 aa)). Cysteine 93 (nucleophile) is an active-site residue. Catalysis depends on residues histidine 186 and glutamate 188. Residues 213-416 (WTMGKFVDQE…LGIPEDLVWR (204 aa)) enclose the GMPS ATP-PPase domain. 241 to 247 (SGGVDST) serves as a coordination point for ATP. Positions 315, 478, 533, and 539 each coordinate XMP.

In terms of assembly, homodimer. Mg(2+) serves as cofactor.

The protein localises to the cytoplasm. Its subcellular location is the cytosol. It carries out the reaction XMP + L-glutamine + ATP + H2O = GMP + L-glutamate + AMP + diphosphate + 2 H(+). It participates in purine metabolism; GMP biosynthesis; GMP from XMP (L-Gln route): step 1/1. Functionally, catalyzes the conversion of xanthine monophosphate (XMP) to GMP in the presence of glutamine and ATP through an adenyl-XMP intermediate. The chain is GMP synthase [glutamine-hydrolyzing] (GUA1) from Phaeosphaeria nodorum (strain SN15 / ATCC MYA-4574 / FGSC 10173) (Glume blotch fungus).